A 131-amino-acid polypeptide reads, in one-letter code: Large ribosomal subunit protein eL14 (131 aa).

Belongs to the eukaryotic ribosomal protein eL14 family. In terms of assembly, component of the large ribosomal subunit. Mature ribosomes consist of a small (40S) and a large (60S) subunit. The 40S subunit contains about 32 different proteins and 1 molecule of RNA (18S). The 60S subunit contains 45 different proteins and 3 molecules of RNA (25S, 5.8S and 5S).

It localises to the cytoplasm. Functionally, component of the ribosome, a large ribonucleoprotein complex responsible for the synthesis of proteins in the cell. The small ribosomal subunit (SSU) binds messenger RNAs (mRNAs) and translates the encoded message by selecting cognate aminoacyl-transfer RNA (tRNA) molecules. The large subunit (LSU) contains the ribosomal catalytic site termed the peptidyl transferase center (PTC), which catalyzes the formation of peptide bonds, thereby polymerizing the amino acids delivered by tRNAs into a polypeptide chain. The nascent polypeptides leave the ribosome through a tunnel in the LSU and interact with protein factors that function in enzymatic processing, targeting, and the membrane insertion of nascent chains at the exit of the ribosomal tunnel. This is Large ribosomal subunit protein eL14 from Candida albicans (strain SC5314 / ATCC MYA-2876) (Yeast).